A 553-amino-acid polypeptide reads, in one-letter code: HTH-type transcriptional regulator SgrR (553 aa).

The HTH marR-type domain maps to 1–117; it reads MPSSRLQQQF…LSQIERRFRQ (117 aa). A DNA-binding region (H-T-H motif) is located at residues 26 to 49; that stretch reads LQELANVLHCSKRHIRSLLNNMQK. Residues 163–494 form a solute-binding region; the sequence is EPEADLAHHW…NDLSKEVSQW (332 aa).

Functionally, activates the small RNA gene sgrS under glucose-phosphate stress conditions as well as yfdZ. Represses its own transcription under both stress and non-stress conditions. Might act as a sensor of the intracellular accumulation of phosphoglucose by binding these molecules in its C-terminal solute-binding domain. The chain is HTH-type transcriptional regulator SgrR from Photorhabdus laumondii subsp. laumondii (strain DSM 15139 / CIP 105565 / TT01) (Photorhabdus luminescens subsp. laumondii).